The following is a 482-amino-acid chain: Mannose-1-phosphate guanylyltransferase 2 (482 aa).

It belongs to the mannose-6-phosphate isomerase type 2 family.

The enzyme catalyses alpha-D-mannose 1-phosphate + GTP + H(+) = GDP-alpha-D-mannose + diphosphate. It functions in the pathway nucleotide-sugar biosynthesis; GDP-alpha-D-mannose biosynthesis; GDP-alpha-D-mannose from alpha-D-mannose 1-phosphate (GTP route): step 1/1. In terms of biological role, involved in GDP-mannose biosynthesis which serves as the activated sugar nucleotide precursor for mannose residues in cell surface polysaccharides. This enzyme participates in synthesis of the LPS O antigen. The sequence is that of Mannose-1-phosphate guanylyltransferase 2 (manC2) from Escherichia coli O157:H7.